A 289-amino-acid chain; its full sequence is Stress response regulator protein 1 (289 aa).

The disordered stretch occupies residues 77-136 (LDCTNSEMDEEDDFEDDEDDENLGLINPLHHKSSHGQISDYSPLTPFTEPPSASLSKPSF). The segment covering 83–98 (EMDEEDDFEDDEDDEN) has biased composition (acidic residues). Polar residues predominate over residues 127–136 (PSASLSKPSF). A Response regulatory domain is found at 163 to 281 (NFLIVDDNII…YDFVMDRIDE (119 aa)). 4-aspartylphosphate is present on Asp-214.

In terms of biological role, required for stress adaptation, morphogenesis and virulence. This Scheffersomyces stipitis (strain ATCC 58785 / CBS 6054 / NBRC 10063 / NRRL Y-11545) (Yeast) protein is Stress response regulator protein 1 (SRR1).